The sequence spans 240 residues: Uridylate kinase (240 aa).

An ATP-binding site is contributed by 13 to 16 (KASG). The interval 21-26 (GSQGFG) is involved in allosteric activation by GTP. A UMP-binding site is contributed by Gly55. The ATP site is built by Gly56 and Arg60. UMP-binding positions include Asp75 and 136-143 (TGNPFFTT). ATP-binding residues include Thr163, Gln164, Tyr169, and Asp172.

Belongs to the UMP kinase family. As to quaternary structure, homohexamer.

The protein localises to the cytoplasm. The catalysed reaction is UMP + ATP = UDP + ADP. Its pathway is pyrimidine metabolism; CTP biosynthesis via de novo pathway; UDP from UMP (UMPK route): step 1/1. Its activity is regulated as follows. Allosterically activated by GTP. Inhibited by UTP. In terms of biological role, catalyzes the reversible phosphorylation of UMP to UDP. This Brucella suis biovar 1 (strain 1330) protein is Uridylate kinase.